Reading from the N-terminus, the 277-residue chain is Co-chaperone protein DjlA (277 aa).

Residues 1 to 4 (MWGK) lie on the Periplasmic side of the membrane. The chain crosses the membrane as a helical span at residues 5-28 (ILGAFFGFLLGGPFGLLLGLFLGH). The Cytoplasmic portion of the chain corresponds to 29–277 (KFDKARRNVY…DMIRKEKGFK (249 aa)). Positions 211–277 (DAYEVLGVTE…DMIRKEKGFK (67 aa)) constitute a J domain.

Homodimer.

The protein localises to the cell inner membrane. Its function is as follows. Regulatory DnaK co-chaperone. Direct interaction between DnaK and DjlA is needed for the induction of the wcaABCDE operon, involved in the synthesis of a colanic acid polysaccharide capsule, possibly through activation of the RcsB/RcsC phosphotransfer signaling pathway. The colanic acid capsule may help the bacterium survive conditions outside the host. The protein is Co-chaperone protein DjlA of Photobacterium profundum (strain SS9).